A 147-amino-acid chain; its full sequence is Basic phospholipase A2 beta-bungarotoxin A1 chain (147 aa).

Positions Met-1 to Ala-19 are cleaved as a signal peptide. Residues Ala-20–Leu-27 constitute a propeptide that is removed on maturation. 6 disulfide bridges follow: Cys-54–Cys-146, Cys-56–Cys-72, Cys-71–Cys-127, Cys-78–Cys-120, Cys-88–Cys-113, and Cys-106–Cys-118. Ca(2+) is bound by residues Tyr-55, Gly-57, and Gly-59. The active site involves His-75. Asp-76 contacts Ca(2+). The active site involves Asp-121.

The protein belongs to the phospholipase A2 family. Group I subfamily. D49 sub-subfamily. Heterodimer; disulfide-linked. The A chains have phospholipase A2 activity and the B chains show homology with the basic protease inhibitors. Ca(2+) serves as cofactor. In terms of tissue distribution, expressed by the venom gland.

It localises to the secreted. It catalyses the reaction a 1,2-diacyl-sn-glycero-3-phosphocholine + H2O = a 1-acyl-sn-glycero-3-phosphocholine + a fatty acid + H(+). In terms of biological role, snake venom phospholipase A2 (PLA2) that inhibits neuromuscular transmission by blocking acetylcholine release from the nerve termini. PLA2 catalyzes the calcium-dependent hydrolysis of the 2-acyl groups in 3-sn-phosphoglycerides. The polypeptide is Basic phospholipase A2 beta-bungarotoxin A1 chain (Bungarus caeruleus (Indian krait)).